The sequence spans 744 residues: Adenosylcobalamin-dependent ribonucleoside-triphosphate reductase (744 aa).

The cysteines at positions 120 and 424 are disulfide-linked. Residues 148 to 159 (SMPFSFLFDQLM) are effector region-1. An effector region-2 region spans residues 169 to 318 (VNSNIKQIPK…ICNLIGKTVV (150 aa)). Catalysis depends on residues cysteine 413 and glutamate 415. The interval 570-631 (FHYAGYLIQR…SKNFASAGTV (62 aa)) is adenosylcobalamin-binding-1. The segment at 690 to 729 (LKQAPKEPINKKTYEERAALITDDVEEVFTKQNDDQKGLE) is adenosylcobalamin-binding-2.

Belongs to the class II ribonucleoside-triphosphate reductase family. In terms of assembly, monomer. The cofactor is adenosylcob(III)alamin.

It catalyses the reaction a 2'-deoxyribonucleoside 5'-triphosphate + [thioredoxin]-disulfide + H2O = a ribonucleoside 5'-triphosphate + [thioredoxin]-dithiol. Its activity is regulated as follows. Allosterically regulated by ATP and dNTP. In Lactobacillus acidophilus (strain ATCC 700396 / NCK56 / N2 / NCFM), this protein is Adenosylcobalamin-dependent ribonucleoside-triphosphate reductase (rtpR).